Consider the following 505-residue polypeptide: ATP synthase subunit alpha, chloroplastic (505 aa).

170–177 (GDRQTGKT) is a binding site for ATP.

Belongs to the ATPase alpha/beta chains family. As to quaternary structure, F-type ATPases have 2 components, CF(1) - the catalytic core - and CF(0) - the membrane proton channel. CF(1) has five subunits: alpha(3), beta(3), gamma(1), delta(1), epsilon(1). CF(0) has four main subunits: a, b, b' and c.

It localises to the plastid. The protein resides in the chloroplast thylakoid membrane. The enzyme catalyses ATP + H2O + 4 H(+)(in) = ADP + phosphate + 5 H(+)(out). In terms of biological role, produces ATP from ADP in the presence of a proton gradient across the membrane. The alpha chain is a regulatory subunit. The protein is ATP synthase subunit alpha, chloroplastic of Phaeodactylum tricornutum (strain CCAP 1055/1).